The sequence spans 570 residues: Keratin, type I cytoskeletal 10 (570 aa).

Positions 1–16 (MSVLYSSSSKQFSSSR) are enriched in low complexity. Positions 1 to 29 (MSVLYSSSSKQFSSSRSGGGGGGGSVRVS) are disordered. The tract at residues 1–143 (MSVLYSSSSK…GDGGSLLSGN (143 aa)) is head. Residues serine 15 and serine 17 each carry the phosphoserine modification. Arginine 32 is subject to Asymmetric dimethylarginine; alternate. An Omega-N-methylarginine; alternate modification is found at arginine 32. Residues serine 34, serine 45, serine 48, and serine 168 each carry the phosphoserine modification. The interval 144–179 (GRVTMQNLNDRLASYMDKVRALEESNYELEGKIKEW) is coil 1A. The IF rod domain maps to 144-458 (GRVTMQNLND…SLLEGEGSSS (315 aa)). The linker 1 stretch occupies residues 180 to 200 (YEKHGNSSQREPRDYSKYYKT). Residues 201–292 (IEDLKGQILT…KNHEEEMRDL (92 aa)) are coil 1B. A linker 12 region spans residues 293–315 (QNVSTGDVNVEMNAAPGVDLTQL). The tract at residues 316–454 (LNNMRNQYEQ…QTYRSLLEGE (139 aa)) is coil 2. The tract at residues 451 to 570 (LEGEGSSSGG…GDQSSKGPRY (120 aa)) is disordered. The tail stretch occupies residues 455–570 (GSSSGGGGGR…GDQSSKGPRY (116 aa)). Positions 456 to 562 (SSSGGGGGRR…GGFKSSGGGD (107 aa)) are enriched in gly residues.

It belongs to the intermediate filament family. (Microbial infection) Interacts (via C-terminal tail domain) with the S.aureus clumping factor, clfB; this interaction probably mediates S.aureus attachment to the highly keratinized squamous epithelial cells from the nasal cavity. In terms of assembly, heterotetramer of two type I and two type II keratins. Heterodimer with KRT1. Two heterodimers of KRT1 and KRT10 form a heterotetramer. The KRT10 subunit in the heterotetramer is probably disulfide-linked. Interacts with PLEC isoform 1C, when in a heterodimer with KRT1. As to quaternary structure, (Microbial infection) Interacts (via the C-terminal tail domain) with S.pneumoniae serine-rich repeat protein PsrP; this interaction probably mediates S.pneumoniae adherence to lung tissue and subsequent pathogenesis. As to expression, expressed in the suprabasal layers of the epidermis throughout the entire sole (at protein level). Expressed in the infundibular regions of the ear, the interscale regions of the tail, and the interfollicular epidermis of the back. Expressed in lung tissue from young mice (at protein level).

The protein localises to the secreted. It is found in the extracellular space. Its subcellular location is the cell surface. It localises to the cytoplasm. Its function is as follows. Plays a role in the establishment of the epidermal barrier on plantar skin. Involved in the maintenance of cell layer development and keratin filament bundles in suprabasal cells of the epithelium. Functionally, (Microbial infection) Acts as a mediator of S.aureus adherence to desquamated nasal epithelial cells via clfB, and hence may play a role in nasal colonization. In terms of biological role, (Microbial infection) Binds S.pneumoniae PsrP, mediating adherence of the bacteria to lung cell lines. The protein is Keratin, type I cytoskeletal 10 (Krt10) of Mus musculus (Mouse).